The primary structure comprises 351 residues: Protein RecA (351 aa).

Glycine 68 to threonine 75 contacts ATP.

Belongs to the RecA family.

It localises to the cytoplasm. Functionally, can catalyze the hydrolysis of ATP in the presence of single-stranded DNA, the ATP-dependent uptake of single-stranded DNA by duplex DNA, and the ATP-dependent hybridization of homologous single-stranded DNAs. It interacts with LexA causing its activation and leading to its autocatalytic cleavage. This chain is Protein RecA, found in Thermotoga neapolitana (strain ATCC 49049 / DSM 4359 / NBRC 107923 / NS-E).